Consider the following 240-residue polypeptide: MLEIRQNHCFYLFNWDEPRQDQTRFFSPEFWRRQGRISGTAQGRGITWFLQTVDLFGVNAALRHYYRGGLWGKINRDRYTFTSLENTRSFAEFRLLSRLHQAGMPVPKPLAAKVEKLSLGGYRADILTEKVENARDLTALLQTENLSDEAWRQIGKLIRRLHDLQICHTDLNAHNILVQQVKEQEKYWLLDFDKCGEKSGDFWKAQNLARLKRSFLKEAARMGIRFTEGDWKNLLKGYQN.

Residue aspartate 170 is part of the active site.

Belongs to the protein kinase superfamily. KdkA/RfaP family.

The protein resides in the cell inner membrane. The catalysed reaction is an alpha-Kdo-(2-&gt;6)-lipid IVA + ATP = a 4-O-phospho-alpha-Kdo-(2-&gt;6)-lipid IVA + ADP + H(+). It functions in the pathway bacterial outer membrane biogenesis; LPS core biosynthesis. Functionally, catalyzes the ATP-dependent phosphorylation of the 3-deoxy-D-manno-octulosonic acid (Kdo) residue in Kdo-lipid IV(A) at the 4-OH position. This chain is 3-deoxy-D-manno-octulosonic acid kinase, found in Actinobacillus succinogenes (strain ATCC 55618 / DSM 22257 / CCUG 43843 / 130Z).